Consider the following 218-residue polypeptide: Peptide methionine sulfoxide reductase MsrA (218 aa).

Residue cysteine 57 is part of the active site.

The protein belongs to the MsrA Met sulfoxide reductase family.

It catalyses the reaction L-methionyl-[protein] + [thioredoxin]-disulfide + H2O = L-methionyl-(S)-S-oxide-[protein] + [thioredoxin]-dithiol. It carries out the reaction [thioredoxin]-disulfide + L-methionine + H2O = L-methionine (S)-S-oxide + [thioredoxin]-dithiol. In terms of biological role, has an important function as a repair enzyme for proteins that have been inactivated by oxidation. Catalyzes the reversible oxidation-reduction of methionine sulfoxide in proteins to methionine. This Brucella suis biovar 1 (strain 1330) protein is Peptide methionine sulfoxide reductase MsrA.